A 299-amino-acid polypeptide reads, in one-letter code: Taste receptor type 2 member 50 (299 aa).

Residue Met1 is a topological domain, extracellular. The helical transmembrane segment at 2–22 (IPFLHIFFSVLILVLFVLGNF) threads the bilayer. Residues 23 to 55 (ANGFIALVNFIDWVKRKKISLADQILTALAVSR) lie on the Cytoplasmic side of the membrane. The helical transmembrane segment at 56–76 (VGLLWALLLNWYLTELNPAFY) threads the bilayer. At 77–87 (SVELRITSYNA) the chain is on the extracellular side. Residues 88–108 (WVVTNHFSMWLAASLSIFYLL) traverse the membrane as a helical segment. Residues 109-126 (KIANFSNLSFLNLKRRVR) lie on the Cytoplasmic side of the membrane. A helical membrane pass occupies residues 127-147 (SIILVILLGSLLFLVCHLLAV). The Extracellular segment spans residues 148-181 (NMDENMWTEEYEGNMTGKMKLRNAAHLSYMTVTT). A glycan (N-linked (GlcNAc...) asparagine) is linked at Asn161. The chain crosses the membrane as a helical span at residues 182 to 202 (LWSFIPFMLSLISFLMLIFSL). The Cytoplasmic portion of the chain corresponds to 203 to 229 (CKHLKKMQLHGEGSRDPSTTVHIKALQ). A helical membrane pass occupies residues 230–250 (TLISFLLLCAIFFLFLIISVW). At 251–259 (SPRRLQNEP) the chain is on the extracellular side. Residues 260–280 (VFMVCKAVGNIYLSFDSFVLI) traverse the membrane as a helical segment. Topologically, residues 281–299 (WRTKKLKHIFLLILCQIRC) are cytoplasmic.

This sequence belongs to the G-protein coupled receptor T2R family.

The protein localises to the membrane. Receptor that may play a role in the perception of bitterness and is gustducin-linked. May play a role in sensing the chemical composition of the gastrointestinal content. The activity of this receptor may stimulate alpha gustducin, mediate PLC-beta-2 activation and lead to the gating of TRPM5. This Macaca mulatta (Rhesus macaque) protein is Taste receptor type 2 member 50 (TAS2R50).